The chain runs to 141 residues: Nucleoside diphosphate kinase (141 aa).

Residues K11, F59, R87, T93, R104, and N114 each coordinate ATP. H117 (pros-phosphohistidine intermediate) is an active-site residue.

The protein belongs to the NDK family. In terms of assembly, homotetramer. It depends on Mg(2+) as a cofactor.

Its subcellular location is the cytoplasm. The catalysed reaction is a 2'-deoxyribonucleoside 5'-diphosphate + ATP = a 2'-deoxyribonucleoside 5'-triphosphate + ADP. The enzyme catalyses a ribonucleoside 5'-diphosphate + ATP = a ribonucleoside 5'-triphosphate + ADP. In terms of biological role, major role in the synthesis of nucleoside triphosphates other than ATP. The ATP gamma phosphate is transferred to the NDP beta phosphate via a ping-pong mechanism, using a phosphorylated active-site intermediate. The polypeptide is Nucleoside diphosphate kinase (Haemophilus influenzae (strain 86-028NP)).